Reading from the N-terminus, the 339-residue chain is MKPYPIQFVSIVIPVYNEEQSLPELLRRTEAACRQLKHEFEIVLVDDGSRDESANILQAAAEREDSPVVAVILNRNYGQHAAIMAGFEQCRGDVVITLDADLQNPPEEIPRLVAQAELGYDVVGTVRNNRQDSAFRRWPSKLINLAVQRSTGVAMSDYGCMLRAYRRTIIDAMLACTERSTFIPILANSFARHTTEVLVEHAEREHGDSKYSPMRLINLMFDLITCMTTTPLRLLSIIGFGMAGLGALFALMLIVLRLIFGATWAGDGTFVLFAVLFVFTGGQFIGMGLLGEYLGRMYSDVRARPRFFIEKVLRSQPAAPAPAVTVDGLTSTHTDQVSP.

2 consecutive transmembrane segments (helical) span residues 235-255 (LSII…MLIV) and 270-290 (FVLF…MGLL).

It belongs to the glycosyltransferase 2 family.

The protein localises to the cell inner membrane. It carries out the reaction UDP-4-deoxy-4-formamido-beta-L-arabinose + di-trans,octa-cis-undecaprenyl phosphate = 4-deoxy-4-formamido-alpha-L-arabinopyranosyl di-trans,octa-cis-undecaprenyl phosphate + UDP. It functions in the pathway glycolipid biosynthesis; 4-amino-4-deoxy-alpha-L-arabinose undecaprenyl phosphate biosynthesis; 4-amino-4-deoxy-alpha-L-arabinose undecaprenyl phosphate from UDP-4-deoxy-4-formamido-beta-L-arabinose and undecaprenyl phosphate: step 1/2. It participates in bacterial outer membrane biogenesis; lipopolysaccharide biosynthesis. In terms of biological role, catalyzes the transfer of 4-deoxy-4-formamido-L-arabinose from UDP to undecaprenyl phosphate. The modified arabinose is attached to lipid A and is required for resistance to polymyxin and cationic antimicrobial peptides. The protein is Undecaprenyl-phosphate 4-deoxy-4-formamido-L-arabinose transferase of Pseudomonas fluorescens (strain ATCC BAA-477 / NRRL B-23932 / Pf-5).